The primary structure comprises 136 residues: Large ribosomal subunit protein uL16 (136 aa).

It belongs to the universal ribosomal protein uL16 family. In terms of assembly, part of the 50S ribosomal subunit.

Binds 23S rRNA and is also seen to make contacts with the A and possibly P site tRNAs. This chain is Large ribosomal subunit protein uL16, found in Rickettsia typhi (strain ATCC VR-144 / Wilmington).